Here is a 259-residue protein sequence, read N- to C-terminus: Proliferating cell nuclear antigen (259 aa).

A DNA-binding region spans residues 61-80; the sequence is RCDRNIALGVNLTSLTKVLR. Residue Lys164 forms a Glycyl lysine isopeptide (Lys-Gly) (interchain with G-Cter in SUMO); alternate linkage. Lys164 participates in a covalent cross-link: Glycyl lysine isopeptide (Lys-Gly) (interchain with G-Cter in ubiquitin); alternate.

This sequence belongs to the PCNA family. Homotrimer. Monoubiquitinated on Lys-164 upon DNA damage, and then polyubiquitinated through 'Lys-63'-linkage.

It localises to the nucleus. Functionally, this protein is an auxiliary protein of DNA polymerase delta and is involved in the control of eukaryotic DNA replication by increasing the polymerase's processibility during elongation of the leading strand. Involved in DNA repair. The chain is Proliferating cell nuclear antigen from Chaetomium thermophilum (strain DSM 1495 / CBS 144.50 / IMI 039719) (Thermochaetoides thermophila).